The chain runs to 539 residues: Probable K(+)/H(+) antiporter subunit D (539 aa).

Transmembrane regions (helical) follow at residues 4 to 23 (WLDH…AAVL), 36 to 58 (AIGF…LAAA), 78 to 100 (FGIV…GLAL), 113 to 135 (AGHH…FLTG), 140 to 162 (LFVF…SGPL), 175 to 197 (LAAS…TLNM), 217 to 239 (MGSA…SFWL), 251 to 273 (AGVF…LLVF), 283 to 305 (FGQE…GVLA), 312 to 331 (LAGY…VGLG), 335 to 357 (MLAG…FLLI), 400 to 422 (VLGL…SGFI), 442 to 464 (AMSA…AMIA), and 484 to 506 (VVVI…SLQA).

This sequence belongs to the CPA3 antiporters (TC 2.A.63) subunit D family. May form a hetero-oligomeric complex that consists of six subunits: PhaAB, PhaC, PhaD, PhaE, PhaF and PhaG.

It is found in the cell membrane. Its function is as follows. Part of a K(+) efflux system which is required for the adaptation of R.meliloti to alkaline pH as well as for the infection process during symbiotic nodule development. The sequence is that of Probable K(+)/H(+) antiporter subunit D (phaD) from Rhizobium meliloti (strain 1021) (Ensifer meliloti).